Here is a 294-residue protein sequence, read N- to C-terminus: Cell division protein FtsQ (294 aa).

The Cytoplasmic segment spans residues 1–26 (MARGPNRRRVDRVPGERRRRLARAMA). A helical membrane pass occupies residues 27 to 49 (LALPSILALAALGGAATLGWRVG). The Periplasmic portion of the chain corresponds to 50–294 (WKSDLLRVRE…GPQGRSSSLR (245 aa)). The POTRA domain occupies 55–123 (LRVREIRFEG…PALEVQLAER (69 aa)). Residues 266 to 294 (AGRRGEPDGRSSYAAGGGGGPQGRSSSLR) are disordered.

This sequence belongs to the FtsQ/DivIB family. FtsQ subfamily.

It localises to the cell inner membrane. Its function is as follows. Essential cell division protein. The chain is Cell division protein FtsQ from Anaeromyxobacter sp. (strain K).